The chain runs to 430 residues: tRNA(Ile)-lysidine synthase (430 aa).

21–26 is a binding site for ATP; it reads SGGLDS.

This sequence belongs to the tRNA(Ile)-lysidine synthase family.

The protein localises to the cytoplasm. It catalyses the reaction cytidine(34) in tRNA(Ile2) + L-lysine + ATP = lysidine(34) in tRNA(Ile2) + AMP + diphosphate + H(+). In terms of biological role, ligates lysine onto the cytidine present at position 34 of the AUA codon-specific tRNA(Ile) that contains the anticodon CAU, in an ATP-dependent manner. Cytidine is converted to lysidine, thus changing the amino acid specificity of the tRNA from methionine to isoleucine. This chain is tRNA(Ile)-lysidine synthase, found in Salmonella paratyphi A (strain ATCC 9150 / SARB42).